The primary structure comprises 248 residues: Pulmonary surfactant-associated protein A (248 aa).

An N-terminal signal peptide occupies residues 1 to 20 (MSLCSLAFTLFLTVVAGIKC). In terms of domain architecture, Collagen-like spans 28-100 (GSPGIPGAPG…PGERGLPGFP (73 aa)). 4-hydroxyproline occurs at positions 30, 33, 36, 42, 54, 57, 63, 67, 70, and 76. Positions 31–99 (GIPGAPGNHG…EPGERGLPGF (69 aa)) are disordered. Over residues 42 to 51 (PGRDGRDGVK) the composition is skewed to basic and acidic residues. The segment covering 54–65 (PGPPGPMGPPGG) has biased composition (pro residues). The segment covering 69 to 82 (LPGRDGLPGAPGAP) has biased composition (low complexity). Residues 84–93 (ERGDKGEPGE) show a composition bias toward basic and acidic residues. Residues 133–248 (SVGDKVFSTN…LQYRLAVCEF (116 aa)) form the C-type lectin domain. 2 disulfides stabilise this stretch: C155–C246 and C224–C238. N-linked (GlcNAc...) asparagine glycosylation occurs at N207. Residues E215, R217, N234, and D235 each coordinate Ca(2+).

It belongs to the SFTPA family. Oligomeric complex of 6 set of homotrimers.

It localises to the secreted. It is found in the extracellular space. The protein localises to the extracellular matrix. The protein resides in the surface film. In terms of biological role, in presence of calcium ions, it binds to surfactant phospholipids and contributes to lower the surface tension at the air-liquid interface in the alveoli of the mammalian lung and is essential for normal respiration. Enhances the expression of MYO18A/SP-R210 on alveolar macrophages. This is Pulmonary surfactant-associated protein A (Sftpa1) from Rattus norvegicus (Rat).